A 105-amino-acid polypeptide reads, in one-letter code: Small ribosomal subunit protein uS10 (105 aa).

It belongs to the universal ribosomal protein uS10 family. As to quaternary structure, part of the 30S ribosomal subunit.

Functionally, involved in the binding of tRNA to the ribosomes. The sequence is that of Small ribosomal subunit protein uS10 from Chlamydia pneumoniae (Chlamydophila pneumoniae).